The sequence spans 513 residues: ATP synthase subunit alpha 2 (513 aa).

An ATP-binding site is contributed by 169 to 176; sequence GDRQTGKT.

It belongs to the ATPase alpha/beta chains family. In terms of assembly, F-type ATPases have 2 components, CF(1) - the catalytic core - and CF(0) - the membrane proton channel. CF(1) has five subunits: alpha(3), beta(3), gamma(1), delta(1), epsilon(1). CF(0) has three main subunits: a(1), b(2) and c(9-12). The alpha and beta chains form an alternating ring which encloses part of the gamma chain. CF(1) is attached to CF(0) by a central stalk formed by the gamma and epsilon chains, while a peripheral stalk is formed by the delta and b chains.

Its subcellular location is the cell inner membrane. It carries out the reaction ATP + H2O + 4 H(+)(in) = ADP + phosphate + 5 H(+)(out). Functionally, produces ATP from ADP in the presence of a proton gradient across the membrane. The alpha chain is a regulatory subunit. The chain is ATP synthase subunit alpha 2 from Shewanella frigidimarina (strain NCIMB 400).